Reading from the N-terminus, the 281-residue chain is MDTIVLDQRGEVFSFFRSLDMLCYAIIAQQYFQDPTVLLLLLKVFVQLSYLTPKPFSQLNALPLFYPLLLNFLISLMVRMFFNLPTAGESLDGYLYGGSIINFIGEKNESSRIDFITSDLVLFCLQIFMALILIASNKRPTQASHIQASQSGLSNVDGDEEPSDLITEDSRDTQQGQRQEDLQRQLENERSRLIARFSHSLYSFQHGLSFGSPQNRNTPLQRQSADSYSTPVCIEVDSEDWKDLVWKSQYATENANTNSINNSPLSSNTTGVPNSVLTNPI.

4 consecutive transmembrane segments (helical) span residues 22-42 (LCYAIIAQQYFQDPTVLLLLL), 62-82 (LPLFYPLLLNFLISLMVRMFF), 84-104 (LPTAGESLDGYLYGGSIINFI), and 115-135 (FITSDLVLFCLQIFMALILIA). Positions 145–154 (HIQASQSGLS) are enriched in polar residues. Disordered stretches follow at residues 145-183 (HIQASQSGLSNVDGDEEPSDLITEDSRDTQQGQRQEDLQ) and 256-281 (NTNSINNSPLSSNTTGVPNSVLTNPI). The segment covering 157–167 (DGDEEPSDLIT) has biased composition (acidic residues). Residues 168-183 (EDSRDTQQGQRQEDLQ) are compositionally biased toward basic and acidic residues.

As to quaternary structure, component of the DSC E3 ubiquitin ligase complex composed of dsc1, dsc2, dsc3 and dsc4.

The protein localises to the endoplasmic reticulum membrane. The protein resides in the golgi apparatus membrane. It functions in the pathway protein modification; protein ubiquitination. Functionally, component of the DSC E3 ubiquitin ligase complex which is required for the sre1 transcriptional activator proteolytic cleavage to release the soluble transcription factor from the membrane in low oxygen or sterol conditions. The complex also plays an important role in the multivesicular body (MVB) pathway and functions in a post-endoplasmic reticulum pathway for protein degradation. The sequence is that of DSC E3 ubiquitin ligase complex subunit 4 (dsc4) from Schizosaccharomyces pombe (strain 972 / ATCC 24843) (Fission yeast).